The primary structure comprises 296 residues: Polyadenylate-binding protein 2-A (296 aa).

A disordered region spans residues M1 to E106. The span at G71 to G82 shows a compositional bias: gly residues. Positions E84–G97 are enriched in acidic residues. Residues D107–S141 adopt a coiled-coil conformation. The necessary for homooligomerization stretch occupies residues N146–Y296. In terms of domain architecture, RRM spans R163 to T240.

As to quaternary structure, monomer and homooligomer. Binds RNA as a monomer and oligomerizes when bound to poly(A). Shows dynamic spatial expression throughout development. First expressed in the animal pole region of the egg and this pattern persists through to the blastula stage. In gastrula and neurula embryos, expressed mainly in ectodermal, neural and epidermal regions. Neural tissue-specific expression pattern persists into tailbud stage when expression is localized to the brain and spinal cord. At early tadpole stage, expression becomes gradually confined to the specific vesicle regions of the developing brain. At stage 39, expressed in the telencephalon and mesencephalon regions of the brain. Also detected in the eye and olfactory pit at the tadpole stage. Expressed during gut endoderm development. At stage 35, expressed exclusively in the anterior portion of the gut endoderm, which includes the prospective liver, stomach and pancreas. As development proceeds, expression becomes restricted to the pancreas, and by stage 46/47 (the seventh day of development) expression is localized exclusively to the pancreas. Expressed in most adult tissues.

The protein resides in the nucleus. Its subcellular location is the cytoplasm. Involved in the 3'-end formation of mRNA precursors (pre-mRNA) by the addition of a poly(A) tail of 200-250 nt to the upstream cleavage product. Stimulates poly(A) polymerase (PAPOLA) conferring processivity on the poly(A) tail elongation reaction and also controls the poly(A) tail length. Increases the affinity of poly(A) polymerase for RNA. Binds to poly(A) and to poly(G) with high affinity. May protect the poly(A) tail from degradation. The sequence is that of Polyadenylate-binding protein 2-A (pabpn1-a) from Xenopus laevis (African clawed frog).